Consider the following 243-residue polypeptide: DNA repair protein RecO (243 aa).

It belongs to the RecO family.

Functionally, involved in DNA repair and RecF pathway recombination. The chain is DNA repair protein RecO from Frankia casuarinae (strain DSM 45818 / CECT 9043 / HFP020203 / CcI3).